Consider the following 641-residue polypeptide: Bifunctional protein glk (641 aa).

The interval 1-21 (MSTGAQTKAAEASQHADGPRL) is disordered. The glucokinase stretch occupies residues 1–340 (MSTGAQTKAA…QLSNRTGGAS (340 aa)). 23–28 (ADVGGT) is a binding site for ATP. The HTH rpiR-type domain occupies 341–417 (SAVFERIRQM…LKLATGLTGT (77 aa)). Positions 341-641 (SAVFERIRQM…SHGAAPAAKE (301 aa)) are putative HTH-type transcriptional regulator. The segment at residues 377–396 (IVDIARKADVSQPTVIRFCR) is a DNA-binding region (H-T-H motif). The SIS domain occupies 461–600 (AIDILNNARR…AVGVAIRRAS (140 aa)). A helical transmembrane segment spans residues 576–596 (SMISRILHLVMIDILAVGVAI).

In the N-terminal section; belongs to the bacterial glucokinase family.

It localises to the membrane. It catalyses the reaction D-glucose + ATP = D-glucose 6-phosphate + ADP + H(+). The sequence is that of Bifunctional protein glk (glk) from Burkholderia thailandensis (strain ATCC 700388 / DSM 13276 / CCUG 48851 / CIP 106301 / E264).